We begin with the raw amino-acid sequence, 311 residues long: Thioredoxin reductase (311 aa).

35–42 (ERGIPGGQ) is an FAD binding site. The cysteines at positions 134 and 137 are disulfide-linked. Position 277–286 (277–286 (DVRDKGLRQI)) interacts with FAD.

The protein belongs to the class-II pyridine nucleotide-disulfide oxidoreductase family. As to quaternary structure, homodimer. The cofactor is FAD.

It localises to the cytoplasm. The catalysed reaction is [thioredoxin]-dithiol + NADP(+) = [thioredoxin]-disulfide + NADPH + H(+). The polypeptide is Thioredoxin reductase (trxB) (Staphylococcus aureus (strain MRSA252)).